The following is a 521-amino-acid chain: Apolipoprotein N-acyltransferase (521 aa).

Helical transmembrane passes span 24 to 44, 71 to 91, 128 to 148, 151 to 171, and 182 to 202; these read IKETGYSILGFVAYVPLFIAL, WLGFFHAFGWITFIGVIIGYI, IGFLAYPWGLAAFTVNNFNNL, IADIFGVFFVSFAVYFLNSGI, and NLLNIAFPTLLITASFTYGMI. In terms of domain architecture, CN hydrolase spans 218 to 472; sequence LNIAAIQLNT…KGYLLSTVKL (255 aa). The Proton acceptor role is filled by Glu263. Residue Lys331 is part of the active site. Cys383 functions as the Nucleophile in the catalytic mechanism.

It belongs to the CN hydrolase family. Apolipoprotein N-acyltransferase subfamily.

It is found in the cell inner membrane. The catalysed reaction is N-terminal S-1,2-diacyl-sn-glyceryl-L-cysteinyl-[lipoprotein] + a glycerophospholipid = N-acyl-S-1,2-diacyl-sn-glyceryl-L-cysteinyl-[lipoprotein] + a 2-acyl-sn-glycero-3-phospholipid + H(+). The protein operates within protein modification; lipoprotein biosynthesis (N-acyl transfer). Catalyzes the phospholipid dependent N-acylation of the N-terminal cysteine of apolipoprotein, the last step in lipoprotein maturation. The chain is Apolipoprotein N-acyltransferase from Borreliella burgdorferi (strain ATCC 35210 / DSM 4680 / CIP 102532 / B31) (Borrelia burgdorferi).